The primary structure comprises 603 residues: Penicillin-binding protein activator LpoA (603 aa).

Residues 1 to 24 (MINHKRLSVPRILTPVALAITLAA) form the signal peptide. A lipid anchor (N-palmitoyl cysteine) is attached at Cys25. A lipid anchor (S-diacylglycerol cysteine) is attached at Cys25.

The protein belongs to the LpoA family. In terms of assembly, interacts with PBP1a.

The protein localises to the cell outer membrane. Its function is as follows. Regulator of peptidoglycan synthesis that is essential for the function of penicillin-binding protein 1A (PBP1a). The sequence is that of Penicillin-binding protein activator LpoA from Vibrio antiquarius (strain Ex25).